Consider the following 142-residue polypeptide: ER-derived vesicles protein ERV15 (142 aa).

The Cytoplasmic portion of the chain corresponds to 1 to 7 (MSGTGLS). A helical membrane pass occupies residues 8–28 (LFVTGLILNCLNSICQIYFTI). Topologically, residues 29 to 55 (LYGDLEADYINSIELCKRVNRLSVPEA) are extracellular. The chain crosses the membrane as a helical span at residues 56–76 (ILQAFISALFLFNGYWFVFLL). At 77–114 (NVPVLAYNASKVYKKTHLLDATDIFRKLGRCKIECFLK) the chain is on the cytoplasmic side. The helical transmembrane segment at 115 to 135 (LGFYLLIFFFYFYRMVTALLE) threads the bilayer. The Extracellular portion of the chain corresponds to 136–142 (NDANLIS).

Belongs to the cornichon family.

Its subcellular location is the membrane. The polypeptide is ER-derived vesicles protein ERV15 (ERV15) (Saccharomyces cerevisiae (strain ATCC 204508 / S288c) (Baker's yeast)).